Consider the following 1978-residue polypeptide: Sodium channel protein type 8 subunit alpha (1978 aa).

Disordered regions lie at residues 1–20 (MAARVLAPPGPDSFKPFTPE) and 28–62 (RIAESKLKKPPKADGSHREDDEDSKPKPNSDLEAG). At 1-132 (MAARVLAPPG…RIAIKILIHS (132 aa)) the chain is on the cytoplasmic side. The span at 28–61 (RIAESKLKKPPKADGSHREDDEDSKPKPNSDLEA) shows a compositional bias: basic and acidic residues. One copy of the I repeat lies at 114 to 442 (ILSPFNLIRR…KAMLEQLKKQ (329 aa)). A helical membrane pass occupies residues 133–151 (VFSMIIMCTILTNCVFMTF). Residues 152 to 158 (SNPPEWS) are Extracellular-facing. The helical transmembrane segment at 159-179 (KNVEYTFTGIYTFESLVKIIA) threads the bilayer. The Cytoplasmic segment spans residues 180–193 (RGFCIDGFTFLRDP). Residues 194–211 (WNWLDFSVIMMAYVTEFV) form a helical membrane-spanning segment. At 212–217 (DLGNVS) the chain is on the extracellular side. N-linked (GlcNAc...) asparagine glycosylation is present at N215. Residues 218–234 (ALRTFRVLRALKTISVI) traverse the membrane as a helical segment. Residues 235 to 253 (PGLKTIVGALIQSVKKLSD) lie on the Cytoplasmic side of the membrane. A helical transmembrane segment spans residues 254 to 273 (VMILTVFCLSVFALIGLQLF). Residues 274–355 (MGNLRNKCVV…PNYGYTSFDT (82 aa)) lie on the Extracellular side of the membrane. C281 and C333 are joined by a disulfide. N289, N295, N308, and N326 each carry an N-linked (GlcNAc...) asparagine glycan. Positions 356-380 (FSWAFLALFRLMTQDYWENLYQLTL) form an intramembrane region, pore-forming. E373 serves as a coordination point for Na(+). Over 381 to 387 (RAAGKTY) the chain is Extracellular. The helical transmembrane segment at 388 to 408 (MIFFVLVIFVGSFYLVNLILA) threads the bilayer. Topologically, residues 409 to 751 (VVAMAYEEQN…EIVNLIVMDP (343 aa)) are cytoplasmic. 2 disordered regions span residues 446-530 (AQAA…KAFR) and 576-597 (DPGSENEFADDEHSTVEESEGR). Positions 473 to 486 (SPRSSSELSKLSSK) are enriched in low complexity. Positions 489–500 (KERRNRRKKRKQ) are enriched in basic residues. 2 stretches are compositionally biased toward basic and acidic residues: residues 501-530 (KELSEGEEKGDPEKVFKSESEDGMRRKAFR) and 586-597 (DEHSTVEESEGR). 2 positions are modified to phosphoserine: S518 and S520. The stretch at 733–1005 (CHPYWIKLKE…QISVIRIKKG (273 aa)) is one II repeat. A helical membrane pass occupies residues 752-770 (FVDLAITICIVLNTLFMAM). Topologically, residues 771–781 (EHHPMTPQFEH) are extracellular. Residues 782 to 801 (VLAVGNLVFTGIFTAEMFLK) traverse the membrane as a helical segment. Residues 802 to 815 (LIAMDPYYYFQEGW) lie on the Cytoplasmic side of the membrane. A helical transmembrane segment spans residues 816–835 (NIFDGFIVSLSLMELGLADV). Residues 836-837 (EG) are Extracellular-facing. A helical transmembrane segment spans residues 838 to 855 (LSVLRSFRLLRVFKLAKS). Residues 856 to 871 (WPTLNMLIKIIGNSVG) are Cytoplasmic-facing. The chain crosses the membrane as a helical span at residues 872–890 (ALGNLTLVLAIIVFIFAVV). Residues 891-919 (GMQLFGKSYKECVCKISQECKLPRWHMND) are Extracellular-facing. C904 and C910 form a disulfide bridge. Residues 920–940 (FFHSFLIVFRVLCGEWIETMW) constitute an intramembrane region (pore-forming). Positions 934 and 937 each coordinate Na(+). Residues 941–953 (DCMEVAGQAMCLI) are Extracellular-facing. C942 and C951 are joined by a disulfide. Residues 954 to 974 (VFMMVMVIGNLVVLNLFLALL) form a helical membrane-spanning segment. Residues 975–1197 (LSSFSADNLA…TCFLIVEHNW (223 aa)) lie on the Cytoplasmic side of the membrane. The segment at 1105–1146 (NLNTEDVSSESDPEGSKDKLDDTSSSEGSTIDIKPEVEEVPV) is disordered. The stretch at 1178-1493 (LGKSWWILRK…KKYYNAMKKL (316 aa)) is one III repeat. The chain crosses the membrane as a helical span at residues 1198 to 1215 (FETFIIFMILLSSGALAF). At 1216-1228 (EDIYIEQRKTIRT) the chain is on the extracellular side. The chain crosses the membrane as a helical span at residues 1229–1247 (ILEYADKVFTYIFILEMLL). The Cytoplasmic segment spans residues 1248–1261 (KWTAYGFVKFFTNA). A helical membrane pass occupies residues 1262-1280 (WCWLDFLIVAVSLVSLIAN). The Extracellular segment spans residues 1281 to 1288 (ALGYSELG). The helical transmembrane segment at 1289–1307 (AIKSLRTLRALRPLRALSR) threads the bilayer. The Cytoplasmic segment spans residues 1308–1324 (FEGMRVVVNALVGAIPS). The chain crosses the membrane as a helical span at residues 1325–1344 (IMNVLLVCLIFWLIFSIMGV). Over 1345-1397 (NLFAGKYHYCFNETSEIRFEIDEVNNKTDCEKLMEGNNTEIRWKNVKINFDNV) the chain is Extracellular. A disulfide bridge links C1354 with C1374. N-linked (GlcNAc...) asparagine glycosylation is found at N1356, N1370, and N1381. An intramembrane region (pore-forming) is located at residues 1398–1419 (GAGYLALLQVATFKGWMDIMYA). Over 1420–1436 (AVDSRKPDEQPDYEGNI) the chain is Extracellular. The chain crosses the membrane as a helical span at residues 1437–1458 (YMYIYFVIFIIFGSFFTLNLFI). Residues 1459–1521 (GVIIDNFNQQ…IVFDFVTQQA (63 aa)) are Cytoplasmic-facing. Position 1495 is a phosphoserine; by PKC (S1495). Residues 1502–1799 (IPRPLNKIQG…WEKFDPDATQ (298 aa)) form an IV repeat. A helical transmembrane segment spans residues 1522-1539 (FDIVIMMLICLNMVTMMV). Topologically, residues 1540–1550 (ETDTQSKQMEN) are extracellular. Residues 1551-1569 (ILYWINLVFVIFFTCECVL) traverse the membrane as a helical segment. Residues 1570-1581 (KMFALRHYYFTI) lie on the Cytoplasmic side of the membrane. The chain crosses the membrane as a helical span at residues 1582-1599 (GWNIFDFVVVILSIVGMF). At 1600–1612 (LADIIEKYFVSPT) the chain is on the extracellular side. The helical transmembrane segment at 1613–1629 (LFRVIRLARIGRILRLI) threads the bilayer. Residues 1630–1648 (KGAKGIRTLLFALMMSLPA) lie on the Cytoplasmic side of the membrane. A helical transmembrane segment spans residues 1649–1666 (LFNIGLLLFLVMFIFSIF). The Extracellular segment spans residues 1667 to 1688 (GMSNFAYVKHEAGIDDMFNFET). An intramembrane region (pore-forming) is located at residues 1689-1711 (FGNSMICLFQITTSAGWDGLLLP). Topologically, residues 1712-1740 (ILNRPPDCSLDKEHPGSGFKGDCGNPSVG) are extracellular. C1719 and C1734 are oxidised to a cystine. A helical transmembrane segment spans residues 1741 to 1763 (IFFFVSYIIISFLIVVNMYIAII). The Cytoplasmic segment spans residues 1764-1978 (LENFSVATEE…RQKEVRESKC (215 aa)). Residues 1893–1922 (EEVSAVVLQRAYRGHLARRGFICRKITSNK) enclose the IQ domain. Residues 1924 to 1978 (ENGGTHREKKESTPSTASLPSYDSVTKPDKEKQQRAEEGRRERAKRQKEVRESKC) form a disordered region. Over residues 1936–1947 (TPSTASLPSYDS) the composition is skewed to polar residues. Basic and acidic residues predominate over residues 1949 to 1978 (TKPDKEKQQRAEEGRRERAKRQKEVRESKC).

Belongs to the sodium channel (TC 1.A.1.10) family. Nav1.6/SCN8A subfamily. As to quaternary structure, the voltage-sensitive sodium channel consists of an ion-conducting pore-forming alpha subunit regulated by one or more beta-1 (SCN1B), beta-2 (SCN2B), beta-3 (SCN3B) and/or beta-4 (SCN4B) subunits. Beta-1 (SCN1B) and beta-3 (SCN3B) are non-covalently associated with alpha, while beta-2 (SCN2B) and beta-4 (SCN4B) are covalently linked by disulfide bonds. Interacts with FGF13. Interacts with NEDD4 and NEDD4L. Interacts with FGF14, GBG3, GBB2 and SCN1B. Interacts with TMEM233. Interacts with the conotoxin GVIIJ. Interacts with the scorpion toxin BMK M1. Interacts with CALM1; the interaction modulates the inactivation rate of SCN8A. May be ubiquitinated by NEDD4L; which would promote its endocytosis. In terms of processing, phosphorylation at Ser-1495 by PKC in a highly conserved cytoplasmic loop slows inactivation of the sodium channel and reduces peak sodium currents. As to expression, expressed in the hippocampus (at protein level). Expressed in brain, cerebellum and spinal cord. In terms of tissue distribution, expressed in non-neuronal tissues, such as monocytes/macrophages.

The protein resides in the cell membrane. The protein localises to the cell projection. Its subcellular location is the axon. It is found in the cytoplasmic vesicle. It localises to the podosome. The catalysed reaction is Na(+)(in) = Na(+)(out). Functionally, pore-forming subunit of a voltage-gated sodium channel complex assuming opened or closed conformations in response to the voltage difference across membranes and through which sodium ions selectively pass along their electrochemical gradient. Contributes to neuronal excitability by regulating action potential threshold and propagation. Its function is as follows. More specifically expressed in non-neuronal cells, could play a role in sodium release from intracellular compartments and participate in the control of podosomes formation and macrophages adhesion and movement. The chain is Sodium channel protein type 8 subunit alpha from Mus musculus (Mouse).